Reading from the N-terminus, the 275-residue chain is 1-deoxy-11-beta-hydroxypentalenate dehydrogenase (275 aa).

12-36 (GAASGIGLALSARFARAGAGVVMAD) lines the NAD(+) pocket. S144 is a binding site for substrate. The Proton acceptor role is filled by Y157. K161 serves as a coordination point for NAD(+).

It belongs to the short-chain dehydrogenases/reductases (SDR) family.

The catalysed reaction is 1-deoxy-11beta-hydroxypentalenate + NAD(+) = 1-deoxy-11-oxopentalenate + NADH + H(+). It functions in the pathway antibiotic biosynthesis; pentalenolactone biosynthesis. Its function is as follows. Catalyzes the oxidation of 1-deoxy-11-beta-hydroxypentalenic acid to 1-deoxy-11-oxopentalenic acid in the biosynthesis of pentalenolactone antibiotic. In Streptomyces exfoliatus (Streptomyces hydrogenans), this protein is 1-deoxy-11-beta-hydroxypentalenate dehydrogenase (penF).